The following is a 326-amino-acid chain: DNA-directed RNA polymerase subunit alpha (326 aa).

Positions 1–231 (MQSNSLLKPR…DQLSVFADLE (231 aa)) are alpha N-terminal domain (alpha-NTD). The alpha C-terminal domain (alpha-CTD) stretch occupies residues 245-326 (IDPVLLRPVD…WPPAGLEKLG (82 aa)).

It belongs to the RNA polymerase alpha chain family. In terms of assembly, homodimer. The RNAP catalytic core consists of 2 alpha, 1 beta, 1 beta' and 1 omega subunit. When a sigma factor is associated with the core the holoenzyme is formed, which can initiate transcription.

It catalyses the reaction RNA(n) + a ribonucleoside 5'-triphosphate = RNA(n+1) + diphosphate. In terms of biological role, DNA-dependent RNA polymerase catalyzes the transcription of DNA into RNA using the four ribonucleoside triphosphates as substrates. The sequence is that of DNA-directed RNA polymerase subunit alpha from Aromatoleum aromaticum (strain DSM 19018 / LMG 30748 / EbN1) (Azoarcus sp. (strain EbN1)).